The sequence spans 65 residues: Large ribosomal subunit protein bL35 (65 aa).

Residues Met-1–Gln-26 are disordered. Basic residues predominate over residues Ala-10 to Gln-26.

The protein belongs to the bacterial ribosomal protein bL35 family.

The chain is Large ribosomal subunit protein bL35 from Actinobacillus succinogenes (strain ATCC 55618 / DSM 22257 / CCUG 43843 / 130Z).